Reading from the N-terminus, the 321-residue chain is Methionyl-tRNA formyltransferase (321 aa).

111 to 114 (SLLP) serves as a coordination point for (6S)-5,6,7,8-tetrahydrofolate.

The protein belongs to the Fmt family.

The enzyme catalyses L-methionyl-tRNA(fMet) + (6R)-10-formyltetrahydrofolate = N-formyl-L-methionyl-tRNA(fMet) + (6S)-5,6,7,8-tetrahydrofolate + H(+). Its function is as follows. Attaches a formyl group to the free amino group of methionyl-tRNA(fMet). The formyl group appears to play a dual role in the initiator identity of N-formylmethionyl-tRNA by promoting its recognition by IF2 and preventing the misappropriation of this tRNA by the elongation apparatus. This Bifidobacterium animalis subsp. lactis (strain AD011) protein is Methionyl-tRNA formyltransferase.